Consider the following 1048-residue polypeptide: FERM, ARHGEF and pleckstrin domain-containing protein 1 (1048 aa).

Residues 1 to 37 (MGEIEQKPTPASRLGAPENSGISTLERGQKPPPTPSG) form a disordered region. Phosphoserine occurs at positions 20 and 23. A Phosphothreonine modification is found at T24. Residues 40–320 (MTVKIQMLDD…EHHAFFRLFE (281 aa)) form the FERM domain. Phosphoserine occurs at positions 340, 373, 389, 403, 427, 433, and 437. The tract at residues 361–536 (FERKHSKIHS…TDDEEEGRRK (176 aa)) is disordered. Polar residues predominate over residues 371–395 (TRSLVSQPTAPNSEVPKQSPQSASL). Polar residues-rich tracts occupy residues 472-491 (STGSLTGSPHLSELSINSQG) and 498-513 (VTLSPNLSPDNKQASP). Phosphoserine occurs at positions 512 and 516. Residues 542–733 (KAYYIAKEVS…TEMVAQLHGT (192 aa)) form the DH domain. Residues 762–859 (EFIRLGSLSK…WMEDIQMAID (98 aa)) enclose the PH 1 domain. S836, S875, and S881 each carry phosphoserine. The tract at residues 865 to 907 (NGPTPELLASSPPDNKSPDEATAADQESEDDLSASRTSLERQA) is disordered. Position 886 is a phosphothreonine (T886). Phosphoserine is present on residues S892, S899, and S902. The 98-residue stretch at 935–1032 (ENQLSGNLLR…WMEVIRSATS (98 aa)) folds into the PH 2 domain.

As to quaternary structure, interacts with CADM1. Interacts with RAC1. As to expression, detected in brain cortex, hippocampus, striatum, olfactory bulb, cerebellum and hindbrain (at protein level).

It is found in the cell membrane. It localises to the synapse. Its subcellular location is the synaptosome. The protein resides in the cytoplasm. The protein localises to the cytosol. It is found in the cell projection. It localises to the filopodium. Its subcellular location is the dendrite. The protein resides in the dendritic spine. In terms of biological role, functions as a guanine nucleotide exchange factor for RAC1. May play a role in semaphorin signaling. Plays a role in the assembly and disassembly of dendritic filopodia, the formation of dendritic spines, regulation of dendrite length and ultimately the formation of synapses. In Mus musculus (Mouse), this protein is FERM, ARHGEF and pleckstrin domain-containing protein 1 (Farp1).